Here is a 270-residue protein sequence, read N- to C-terminus: MSRIKNTFAALSAQGKKGLIPFMTAGDPDPARTVEFMHALAAGGADVIELGVPFSDPMADGPVIQQSSERALAHGVSLRHVIADVKRFRETNDTTPVVLMGYANPIERMGTEAFAKAAKEAGVDGVLVVDYPPEECANFAEQMQSAGIDPIFLLAPTSTDERIAEVGKIASGYVYYVSLKGVTGAANLDVSSIASKIPAIKSRVPLPVGVGFGIRDAQTARSVAEVSDAVVIGSRIVQLLEQAAPEAAAETLTRFVAEVREALDSVATAR.

Catalysis depends on proton acceptor residues Glu-49 and Asp-60.

Belongs to the TrpA family. As to quaternary structure, tetramer of two alpha and two beta chains.

It carries out the reaction (1S,2R)-1-C-(indol-3-yl)glycerol 3-phosphate + L-serine = D-glyceraldehyde 3-phosphate + L-tryptophan + H2O. It functions in the pathway amino-acid biosynthesis; L-tryptophan biosynthesis; L-tryptophan from chorismate: step 5/5. Its function is as follows. The alpha subunit is responsible for the aldol cleavage of indoleglycerol phosphate to indole and glyceraldehyde 3-phosphate. In Paraburkholderia phytofirmans (strain DSM 17436 / LMG 22146 / PsJN) (Burkholderia phytofirmans), this protein is Tryptophan synthase alpha chain.